The chain runs to 575 residues: Bifunctional decalin synthase calF (575 aa).

A signal peptide spans 1–18 (MSFKPLLLSLSLLSPALG). N-linked (GlcNAc...) asparagine glycans are attached at residues asparagine 46, asparagine 103, asparagine 127, asparagine 175, asparagine 268, asparagine 308, asparagine 359, asparagine 425, and asparagine 485. The FAD-binding PCMH-type domain occupies 118–297 (LGNYASYSIN…LSMTTKVFQD (180 aa)).

This sequence belongs to the oxygen-dependent FAD-linked oxidoreductase family.

The protein operates within secondary metabolite biosynthesis. In terms of biological role, bifunctional decaline synthase; part of the gene cluster that mediates the biosynthesis of calbistrin A and related compounds. Calbistrin A is a secondary metabolite with an interesting structure that was recently found to have bioactivity against leukemia cells. It consists of two polyketides linked by an ester bond: a bicyclic decalin containing polyketide and a linear 12 carbon dioic acid structure. The polyketide synthase calA is probably responsible for forming the decalin moiety. Because calA lacks a designated enoylreductase (ER) domain, the required activity is provided by the trans-enoyl reductase calK. Following release from the PKS, calF then probably catalyzes the oxidation and the subsequent Diels Alder cycloisomerization that lead to the formation of the decalin moiety. The decalin polyketide backbone includes two C-methyl groups, at C7 and C11 in backbone, of which the C7 position is probably methylated by the methyltransferase domain of calA. A candidate for adding the methyl group at C11, if not done by CalA, is the cluster methyltransferase calH. Several additional tailoring enzymes within the cluster could be involved in the modification of the decalin polyketide product. Those include the 3 cytochrome P450 monooxygenases CalE, CalG and CalL, of which one might be responsible for the introduction of the extra hydroxyl group attached to the backbone of the decalin moiety, at position C9 in the backbone, that allows for attachment of the linear moiety. One tailoring enzyme activity that is expected to be involved in biosynthesis of calbistrin is an acyltransferase for connecting the two polyketide synthase products, and which could be performed by the cluster acyltransferase calJ. The enzyme responsible for the biosynthesis of the linear moiety, probably a second PKS, has not been identified yet. In Penicillium decumbens, this protein is Bifunctional decalin synthase calF.